We begin with the raw amino-acid sequence, 408 residues long: Endo-1,4-beta-xylanase A (408 aa).

Residues 1 to 19 (MKLSASFAALALLLPFVQA) form the signal peptide. A CBM1 domain is found at 20–55 (QSPVWGQCGGIGWTGPTTCTAGNVCQEYSAYYSQCI). A disordered region spans residues 64 to 89 (TSVSTAPNPPPTSHTSTSSAPSGAST). Positions 76–89 (SHTSTSSAPSGAST) are enriched in low complexity. Positions 88 to 405 (STSTAKLNTL…KPAYDGIAIG (318 aa)) constitute a GH10 domain. E222 acts as the Proton donor in catalysis. The active-site Nucleophile is E327. A disulfide bridge connects residues C355 and C361.

This sequence belongs to the glycosyl hydrolase 10 (cellulase F) family.

Its subcellular location is the secreted. The catalysed reaction is Endohydrolysis of (1-&gt;4)-beta-D-xylosidic linkages in xylans.. The protein operates within glycan degradation; xylan degradation. Functionally, endo-1,4-beta-xylanase involved in the hydrolysis of xylan, a major structural heterogeneous polysaccharide found in plant biomass representing the second most abundant polysaccharide in the biosphere, after cellulose. This chain is Endo-1,4-beta-xylanase A (xynA), found in Phanerodontia chrysosporium (White-rot fungus).